The following is a 450-amino-acid chain: Phosphoglucosamine mutase (450 aa).

Ser-101 functions as the Phosphoserine intermediate in the catalytic mechanism. The Mg(2+) site is built by Ser-101, Asp-242, Asp-244, and Asp-246. Residue Ser-101 is modified to Phosphoserine.

Belongs to the phosphohexose mutase family. Mg(2+) is required as a cofactor. In terms of processing, activated by phosphorylation.

It carries out the reaction alpha-D-glucosamine 1-phosphate = D-glucosamine 6-phosphate. Functionally, catalyzes the conversion of glucosamine-6-phosphate to glucosamine-1-phosphate. This Rhodopseudomonas palustris (strain BisB5) protein is Phosphoglucosamine mutase.